The following is an 854-amino-acid chain: Periodic tryptophan protein 2 homolog (854 aa).

WD repeat units lie at residues 9 to 52, 53 to 93, 94 to 132, 144 to 183, 188 to 227, 252 to 291, 294 to 334, 337 to 376, 379 to 418, 422 to 464, 465 to 504, 507 to 546, and 569 to 608; these read NLVG…TFPF, ENHK…LHYF, NFKSPVGAIEFSPNGKFFAVSLGKLIQVWRTPNSLEERE, GHFDDIVSISWSADSRFFISTSKDLTARLHSVDPIEGFHP, GHKNTVVSGFFSKDQQTIYTVSKDGALFVWKYSPLFQAGE, NQNSKLRCAAFHPTSNLLVVGFSSGLFGIYELPSFTMLYQ, ITQS…YVLK, SHYDALSTLQYSSDGQRIITGADDGKIKVWDMNSGFCIVT, QHTSAVSGLCFSKRGNVLFSSSLDGSVRAWDLIRYRNFRT, PSRV…ETLA, GHEGPVSSLSFNSSGSLLASGSWDKTVRIWDIFSRSGIVE, PIPSDVLSLAFHPDGKEVCVASLDGQLTFWNVQEGKQTSL, and SLNKTFTSICYSADGSCVLSAGTSKYVCLYDIITGVLIKK. The residue at position 640 (threonine 640) is a Phosphothreonine. At serine 645 the chain carries Phosphoserine. The WD 14 repeat unit spans residues 668–709; it reads TRPEIICHGVQFSPSGGAFAAATTEGLMIYSLYNDFLFDPIN.

This sequence belongs to the WD repeat PWP2 family.

This is Periodic tryptophan protein 2 homolog from Schizosaccharomyces pombe (strain 972 / ATCC 24843) (Fission yeast).